The sequence spans 387 residues: WD repeat-containing protein 89 (387 aa).

WD repeat units follow at residues 21–65 (KEPT…VLRE), 68–107 (GYPG…EKPV), 112–156 (GYPS…QDLS), 168–208 (THSD…EEDA), 214–254 (NSIS…TDEP), and 319–358 (GHAA…KTFT).

This is WD repeat-containing protein 89 (WDR89) from Pongo abelii (Sumatran orangutan).